The following is a 246-amino-acid chain: Bacteriorhodopsin-II-like protein (246 aa).

The next 7 membrane-spanning stretches (helical) occupy residues 7-27, 45-65, 82-102, 107-127, 135-155, 182-202, and 205-225; these read EATW…YFAV, TLIP…LGVI, YADW…VAGA, LYKL…GSMM, IVWW…LLGE, WALY…IIAV, and EIML…AVLL. The residue at position 217 (K217) is an N6-(retinylidene)lysine.

It belongs to the archaeal/bacterial/fungal opsin family. The covalent binding of retinal to the apoprotein, bacterioopsin, generates bacteriorhodopsin.

The protein localises to the cell membrane. In terms of biological role, has no proton-pumping activity but is potentially capable of functioning as a sensory SRII-like protein. The chromophore contains 36.5% all-trans-, 7.6% 11-cis- and 56.4% 13-cis-retinal in the dark and 30.1% 11-cis- and 47.7% 13-cis-retinal upon illumination with &gt;460 nm light. The protein is Bacteriorhodopsin-II-like protein (bop2) of Haloquadratum walsbyi (strain DSM 16790 / HBSQ001).